Here is a 471-residue protein sequence, read N- to C-terminus: Glutamate--tRNA ligase 1 (471 aa).

The 'HIGH' region motif lies at 15-25; sequence PSPTGYLHIGG. Positions 243–247 match the 'KMSKS' region motif; the sequence is KLSKR. Lysine 246 serves as a coordination point for ATP.

Belongs to the class-I aminoacyl-tRNA synthetase family. Glutamate--tRNA ligase type 1 subfamily. In terms of assembly, monomer.

The protein localises to the cytoplasm. The enzyme catalyses tRNA(Glu) + L-glutamate + ATP = L-glutamyl-tRNA(Glu) + AMP + diphosphate. Its function is as follows. Catalyzes the attachment of glutamate to tRNA(Glu) in a two-step reaction: glutamate is first activated by ATP to form Glu-AMP and then transferred to the acceptor end of tRNA(Glu). The polypeptide is Glutamate--tRNA ligase 1 (Cereibacter sphaeroides (strain ATCC 17023 / DSM 158 / JCM 6121 / CCUG 31486 / LMG 2827 / NBRC 12203 / NCIMB 8253 / ATH 2.4.1.) (Rhodobacter sphaeroides)).